We begin with the raw amino-acid sequence, 225 residues long: Ribose-5-phosphate isomerase A (225 aa).

Residues 33 to 36 (TGST), 84 to 87 (DGAD), and 96 to 99 (KGGG) each bind substrate. E105 functions as the Proton acceptor in the catalytic mechanism. K123 contributes to the substrate binding site.

Belongs to the ribose 5-phosphate isomerase family. As to quaternary structure, homodimer.

The enzyme catalyses aldehydo-D-ribose 5-phosphate = D-ribulose 5-phosphate. It participates in carbohydrate degradation; pentose phosphate pathway; D-ribose 5-phosphate from D-ribulose 5-phosphate (non-oxidative stage): step 1/1. In terms of biological role, catalyzes the reversible conversion of ribose-5-phosphate to ribulose 5-phosphate. The protein is Ribose-5-phosphate isomerase A of Halobacterium salinarum (strain ATCC 29341 / DSM 671 / R1).